Here is a 71-residue protein sequence, read N- to C-terminus: Ubiquinol-cytochrome c reductase complex assembly factor 6 (71 aa).

The Mitochondrial matrix segment spans residues 1–8 (MPAGVPMS). A helical; Signal-anchor for type II membrane protein transmembrane segment spans residues 9–25 (TYLKMLAASLLAMCAGA). The Mitochondrial intermembrane segment spans residues 26-71 (EVVHRYYRPDLTIPEIPPKRGELKTELLGLKERKHKPQISQQEELK). The segment at 52 to 71 (LLGLKERKHKPQISQQEELK) is disordered.

This sequence belongs to the UQCC6 family. As to quaternary structure, interacts with UQCRC1. Interacts with UQCRQ. Interacts with UQCC5. Forms a complex, named COMB/coordinator of mitochondrial CYTB biogenesis, composed of UQCC1, UQCC2, UQCC4, UQCC5 and UQCC6; stabilizes nascent cytochrome b/MT-CYB and promotes its membrane insertion. Forms a complex, named COMA, composed of UQCC1, UQCC2 and UQCC4; activates MT-CYB translation. Forms a complex, named COMC, composed of UQCC1, UQCC2; UQCC3 and UQCC4; mediates MT-CYB hemylation and association with the first nuclear-encoded complex III subunit UQCRQ. Interacts with MT-CYB.

The protein resides in the mitochondrion inner membrane. Required for the assembly and stability of the mitochondrial ubiquinol-cytochrome c reductase complex (complex III (CIII) or cytochrome b-c1 complex), a multisubunit transmembrane complex that is part of the mitochondrial electron transport chain (ETC) which drives oxidative phosphorylation. Mediates early complex III biogenesis. Participates in regulating the levels of electron transport chain proteins, and therefore energy supply, in response to changes in energy demand. Also required for cytochrome c oxidase complex (complex IV) assembly. This is Ubiquinol-cytochrome c reductase complex assembly factor 6 from Pongo abelii (Sumatran orangutan).